A 117-amino-acid polypeptide reads, in one-letter code: Reprimo-like protein (117 aa).

A helical membrane pass occupies residues Val64–Leu84. The residue at position 106 (Ser106) is a Phosphoserine.

Belongs to the reprimo family.

Its subcellular location is the membrane. This is Reprimo-like protein (Rprml) from Mus musculus (Mouse).